The following is a 190-amino-acid chain: Xanthine phosphoribosyltransferase (190 aa).

Xanthine-binding residues include leucine 20 and asparagine 27. 129–133 (ANGAA) contributes to the 5-phospho-alpha-D-ribose 1-diphosphate binding site. Residue lysine 157 participates in xanthine binding.

Belongs to the purine/pyrimidine phosphoribosyltransferase family. Xpt subfamily. As to quaternary structure, homodimer.

It is found in the cytoplasm. The enzyme catalyses XMP + diphosphate = xanthine + 5-phospho-alpha-D-ribose 1-diphosphate. It functions in the pathway purine metabolism; XMP biosynthesis via salvage pathway; XMP from xanthine: step 1/1. Converts the preformed base xanthine, a product of nucleic acid breakdown, to xanthosine 5'-monophosphate (XMP), so it can be reused for RNA or DNA synthesis. This Laribacter hongkongensis (strain HLHK9) protein is Xanthine phosphoribosyltransferase.